The primary structure comprises 99 residues: Gibberellin-regulated protein 2 (99 aa).

The first 26 residues, 1–26 (MAVFRSTLVLLLIIVCLTTYELHVHA), serve as a signal peptide directing secretion.

It belongs to the GASA family. Six disulfide bonds may be present. As to expression, dry seeds and maturating siliques.

Its subcellular location is the secreted. In terms of biological role, gibberellin-regulated protein that may function in hormonal controlled steps of development such as seed germination, flowering and seed maturation. This chain is Gibberellin-regulated protein 2 (GASA2), found in Arabidopsis thaliana (Mouse-ear cress).